The sequence spans 332 residues: Glycerol-3-phosphate dehydrogenase [NAD(P)+] (332 aa).

NADPH-binding residues include S15, W16, and K110. Sn-glycerol 3-phosphate-binding residues include K110, G137, and S139. A141 lines the NADPH pocket. K192, D245, S255, R256, and N257 together coordinate sn-glycerol 3-phosphate. The active-site Proton acceptor is the K192. Residue R256 coordinates NADPH. An NADPH-binding site is contributed by E282.

Belongs to the NAD-dependent glycerol-3-phosphate dehydrogenase family.

It localises to the cytoplasm. The enzyme catalyses sn-glycerol 3-phosphate + NAD(+) = dihydroxyacetone phosphate + NADH + H(+). It carries out the reaction sn-glycerol 3-phosphate + NADP(+) = dihydroxyacetone phosphate + NADPH + H(+). It functions in the pathway membrane lipid metabolism; glycerophospholipid metabolism. Its function is as follows. Catalyzes the reduction of the glycolytic intermediate dihydroxyacetone phosphate (DHAP) to sn-glycerol 3-phosphate (G3P), the key precursor for phospholipid synthesis. This Coxiella burnetii (strain CbuG_Q212) (Coxiella burnetii (strain Q212)) protein is Glycerol-3-phosphate dehydrogenase [NAD(P)+].